Consider the following 156-residue polypeptide: Small ribosomal subunit protein uS7 (156 aa).

The protein belongs to the universal ribosomal protein uS7 family. As to quaternary structure, part of the 30S ribosomal subunit. Contacts proteins S9 and S11.

Functionally, one of the primary rRNA binding proteins, it binds directly to 16S rRNA where it nucleates assembly of the head domain of the 30S subunit. Is located at the subunit interface close to the decoding center, probably blocks exit of the E-site tRNA. The chain is Small ribosomal subunit protein uS7 from Aromatoleum aromaticum (strain DSM 19018 / LMG 30748 / EbN1) (Azoarcus sp. (strain EbN1)).